The chain runs to 61 residues: Photosystem II reaction center protein K (61 aa).

The propeptide occupies 1–24 (MLNIFSLICICLNSALHSSSFFFA). A helical membrane pass occupies residues 32-52 (FFNPIVDFMPVIPVLFFLLAL).

Belongs to the PsbK family. In terms of assembly, PSII is composed of 1 copy each of membrane proteins PsbA, PsbB, PsbC, PsbD, PsbE, PsbF, PsbH, PsbI, PsbJ, PsbK, PsbL, PsbM, PsbT, PsbX, PsbY, PsbZ, Psb30/Ycf12, at least 3 peripheral proteins of the oxygen-evolving complex and a large number of cofactors. It forms dimeric complexes.

Its subcellular location is the plastid. The protein resides in the chloroplast thylakoid membrane. Its function is as follows. One of the components of the core complex of photosystem II (PSII). PSII is a light-driven water:plastoquinone oxidoreductase that uses light energy to abstract electrons from H(2)O, generating O(2) and a proton gradient subsequently used for ATP formation. It consists of a core antenna complex that captures photons, and an electron transfer chain that converts photonic excitation into a charge separation. This chain is Photosystem II reaction center protein K, found in Drimys granadensis.